The following is a 228-amino-acid chain: UPF0758 protein Gura_4138 (228 aa).

The region spanning 106–228 (RFTSPSQVFE…FLSFVDRGMM (123 aa)) is the MPN domain. Positions 177, 179, and 190 each coordinate Zn(2+). The short motif at 177–190 (HNHPTGDPTPSRED) is the JAMM motif element.

The protein belongs to the UPF0758 family.

The chain is UPF0758 protein Gura_4138 from Geotalea uraniireducens (strain Rf4) (Geobacter uraniireducens).